A 115-amino-acid polypeptide reads, in one-letter code: Xenovulene A biosynthesis cluster protein asL2 (115 aa).

In terms of biological role, part of the gene cluster that mediates the biosynthesis of xenovulene A, an unusual meroterpenoid that has potent inhibitory effects on the human gamma-aminobutyrate A (GABAA) benzodiazepine receptor. The first step of xenovulene A biosynthesis is the biosynthesis of 3-methylorcinaldehyde performed by the non-reducing polyketide synthase aspks1. The salicylate hydroxylase asL1 then catalyzes the oxidative dearomatization of 3-methylorcinaldehyde to yield a dearomatized hydroxycyclohexadione. The 2-oxoglutarate-dependent dioxygenase asL3 further catalyzes the oxidative ring expansion to provide the first tropolone metabolite. The cytochrome P450 monooxygenase asR2 allows the synthesis of tropolone hemiacetal. In parallel, a previously unrecognised class of terpene cyclase, asR6, produces alpha-humulene from farnesylpyrophosphate (FPP). The putative Diels-Alderase asR5 probably catalyzes the formation of the tropolone-humulene skeleton by linking humulene and the polyketide moiety. Oxidative-ring contractions catalyzed by asL4 and asL6 then processively remove carbon atoms from the polyketide to yield xenovulene A. The polypeptide is Xenovulene A biosynthesis cluster protein asL2 (Sarocladium schorii (Acremonium strictum (strain IMI 501407))).